Here is a 549-residue protein sequence, read N- to C-terminus: Myotubularin-related protein 9 (549 aa).

Position 1 is an N-acetylmethionine (Met-1). Residues 4–99 form the GRAM domain; sequence AELIKTPRVD…LNIASSIEAL (96 aa). A Myotubularin phosphatase domain is found at 123–498; sequence GWHSFLPEQE…QSLPLWEGIF (376 aa). A coiled-coil region spans residues 508 to 542; that stretch reads LDEAYEEMVNIIEYNKELQAKVNILRRQLAELETE. A Phosphoserine modification is found at Ser-548.

This sequence belongs to the protein-tyrosine phosphatase family. Non-receptor class myotubularin subfamily. As to quaternary structure, homodimer. Heterodimer (via C-terminus) with lipid phosphatase MTMR6 (via C-terminus). Heterodimer (via coiled coil domain) with lipid phosphatase MTMR7 (via C-terminus). Heterodimer with lipid phosphatase MTMR8. As to expression, expressed in many tissues.

The protein resides in the cytoplasm. Its subcellular location is the cell projection. It localises to the ruffle membrane. It is found in the perinuclear region. The protein localises to the endoplasmic reticulum. Functionally, acts as an adapter for myotubularin-related phosphatases. Increases lipid phosphatase MTMR6 catalytic activity, specifically towards phosphatidylinositol 3,5-bisphosphate and MTMR6 binding affinity for phosphorylated phosphatidylinositols. Positively regulates lipid phosphatase MTMR7 catalytic activity. Increases MTMR8 catalytic activity towards phosphatidylinositol 3-phosphate. The formation of the MTMR6-MTMR9 complex, stabilizes both MTMR6 and MTMR9 protein levels. Stabilizes MTMR8 protein levels. Plays a role in the late stages of macropinocytosis possibly by regulating MTMR6-mediated dephosphorylation of phosphatidylinositol 3-phosphate in membrane ruffles. Negatively regulates autophagy, in part via its association with MTMR8. Negatively regulates DNA damage-induced apoptosis, in part via its association with MTMR6. Does not bind mono-, di- and tri-phosphorylated phosphatidylinositols, phosphatidic acid and phosphatidylserine. In Homo sapiens (Human), this protein is Myotubularin-related protein 9 (MTMR9).